The following is a 73-amino-acid chain: Defensin-like protein 87 (73 aa).

The first 27 residues, 1 to 27, serve as a signal peptide directing secretion; sequence MTTKKTSSVVLPLLLVFALILMPMVAG. 3 cysteine pairs are disulfide-bonded: Cys-33–Cys-71, Cys-45–Cys-69, and Cys-49–Cys-70.

The protein belongs to the DEFL family.

It localises to the secreted. The polypeptide is Defensin-like protein 87 (Arabidopsis thaliana (Mouse-ear cress)).